Here is a 297-residue protein sequence, read N- to C-terminus: Ribosomal RNA small subunit methyltransferase A (297 aa).

S-adenosyl-L-methionine-binding residues include Asn-31, Leu-33, Gly-58, Glu-79, Asp-104, and Asn-129.

This sequence belongs to the class I-like SAM-binding methyltransferase superfamily. rRNA adenine N(6)-methyltransferase family. RsmA subfamily.

It localises to the cytoplasm. It catalyses the reaction adenosine(1518)/adenosine(1519) in 16S rRNA + 4 S-adenosyl-L-methionine = N(6)-dimethyladenosine(1518)/N(6)-dimethyladenosine(1519) in 16S rRNA + 4 S-adenosyl-L-homocysteine + 4 H(+). Its function is as follows. Specifically dimethylates two adjacent adenosines (A1518 and A1519) in the loop of a conserved hairpin near the 3'-end of 16S rRNA in the 30S particle. May play a critical role in biogenesis of 30S subunits. The sequence is that of Ribosomal RNA small subunit methyltransferase A from Pediococcus pentosaceus (strain ATCC 25745 / CCUG 21536 / LMG 10740 / 183-1w).